Consider the following 493-residue polypeptide: 3-octaprenyl-4-hydroxybenzoate carboxy-lyase (493 aa).

A Mn(2+)-binding site is contributed by N172. Prenylated FMN contacts are provided by residues 175–177 (IYR), 189–191 (RWL), and 194–195 (RG). E238 lines the Mn(2+) pocket. D287 (proton donor) is an active-site residue.

This sequence belongs to the UbiD family. As to quaternary structure, homohexamer. Requires prenylated FMN as cofactor. Mn(2+) serves as cofactor.

The protein localises to the cell membrane. The enzyme catalyses a 4-hydroxy-3-(all-trans-polyprenyl)benzoate + H(+) = a 2-(all-trans-polyprenyl)phenol + CO2. It functions in the pathway cofactor biosynthesis; ubiquinone biosynthesis. In terms of biological role, catalyzes the decarboxylation of 3-octaprenyl-4-hydroxy benzoate to 2-octaprenylphenol, an intermediate step in ubiquinone biosynthesis. The polypeptide is 3-octaprenyl-4-hydroxybenzoate carboxy-lyase (Shewanella baltica (strain OS155 / ATCC BAA-1091)).